An 88-amino-acid polypeptide reads, in one-letter code: MSYQYPMDETWSTEEIIDVVNFFSLIEKAYEKQVDREEILALYRRFKQIVPSKSEEKKLFTQFQEASGYSSYHVVKKARETNESNIRM.

This sequence belongs to the UPF0223 family.

The chain is UPF0223 protein OB1419 from Oceanobacillus iheyensis (strain DSM 14371 / CIP 107618 / JCM 11309 / KCTC 3954 / HTE831).